The following is a 601-amino-acid chain: Putative purine permease C1399.01c (601 aa).

Transmembrane regions (helical) follow at residues 64 to 84 (VPVL…VGGV), 102 to 122 (TNYL…IQIA), 131 to 151 (YYIG…VSVA), 179 to 199 (YGAF…MSFI), 207 to 227 (LFPP…LISS), 264 to 284 (GWGS…IIII), 294 to 314 (TTSV…TGYW), 337 to 357 (IYGP…MEAI), 424 to 444 (FFCA…AVFV), 450 to 470 (VLGG…IAII), 481 to 501 (FILT…DWFT), and 522 to 542 (LVME…NLIL).

Belongs to the nucleobase:cation symporter-2 (NCS2) (TC 2.A.40) family.

Its subcellular location is the vacuole membrane. The sequence is that of Putative purine permease C1399.01c from Schizosaccharomyces pombe (strain 972 / ATCC 24843) (Fission yeast).